The chain runs to 442 residues: Protoheme IX farnesyltransferase (442 aa).

Residues 1–167 form a unknown region; sequence MGVYSLLVLG…AYVQLMKPRL (167 aa). Helical transmembrane passes span 49–69, 76–96, 106–126, 167–187, 194–214, 245–265, 267–287, 308–328, 365–385, 386–406, and 421–441; these read AAAL…RTGA, AVTL…YTAM, VHLT…AWTL, LMWL…SQLG, AATV…SGTF, LAFG…VNLL, AVLG…VLKP, WVAV…VIFL, HIVY…ELTG, LGPL…YFAI, and FHAS…DTMV. A prenyltransferase region spans residues 168-439; it reads MWLLCLVAGA…CLLVAVVLDT (272 aa).

It in the C-terminal section; belongs to the UbiA prenyltransferase family. Protoheme IX farnesyltransferase subfamily.

It is found in the cell membrane. The catalysed reaction is heme b + (2E,6E)-farnesyl diphosphate + H2O = Fe(II)-heme o + diphosphate. Its pathway is porphyrin-containing compound metabolism; heme O biosynthesis; heme O from protoheme: step 1/1. In terms of biological role, converts heme B (protoheme IX) to heme O by substitution of the vinyl group on carbon 2 of heme B porphyrin ring with a hydroxyethyl farnesyl side group. In Halobacterium salinarum (strain ATCC 700922 / JCM 11081 / NRC-1) (Halobacterium halobium), this protein is Protoheme IX farnesyltransferase (ctaB).